The following is a 349-amino-acid chain: Glycosyltransferase 8 domain-containing protein 2 (349 aa).

Residues 1–6 lie on the Cytoplasmic side of the membrane; that stretch reads MALLRK. Residues 7 to 24 traverse the membrane as a helical; Signal-anchor for type II membrane protein segment; the sequence is INQVLLFLLIVTLCVILY. At 25–349 the chain is on the lumenal side; it reads KKVHKGTVSK…AGIFKLNHHS (325 aa). N-linked (GlcNAc...) asparagine glycosylation is present at Asn234.

This sequence belongs to the glycosyltransferase 8 family.

It is found in the membrane. This chain is Glycosyltransferase 8 domain-containing protein 2 (GLT8D2), found in Macaca fascicularis (Crab-eating macaque).